We begin with the raw amino-acid sequence, 325 residues long: Diacylglycerol acyltransferase/mycolyltransferase Ag85B (325 aa).

Residues Met-1–Ala-40 form the signal peptide. Residue Leu-82–Arg-83 coordinates substrate. The segment at Phe-98–Ile-108 is fibronectin-binding. Cys-127 and Cys-132 are disulfide-bonded. Residues Ser-166 and Asp-194 each coordinate substrate. Ser-166 functions as the Nucleophile in the catalytic mechanism. Glu-270 is a catalytic residue. Residues Phe-272–Ser-275, Lys-279, and His-302–Trp-304 each bind substrate. The active site involves His-302.

It belongs to the mycobacterial A85 antigen family.

The protein resides in the secreted. The enzyme catalyses 2 alpha,alpha'-trehalose 6-mycolate = alpha,alpha'-trehalose 6,6'-bismycolate + alpha,alpha-trehalose. It catalyses the reaction an acyl-CoA + a 1,2-diacyl-sn-glycerol = a triacyl-sn-glycerol + CoA. Functionally, the antigen 85 proteins (FbpA, FbpB, FbpC) are responsible for the high affinity of mycobacteria for fibronectin, a large adhesive glycoprotein, which facilitates the attachment of Mycobacteria to murine alveolar macrophages (AMs). They also help to maintain the integrity of the cell wall by catalyzing the transfer of mycolic acids to cell wall arabinogalactan and through the synthesis of alpha,alpha-trehalose dimycolate (TDM, cord factor). They catalyze the transfer of a mycoloyl residue from one molecule of alpha,alpha-trehalose monomycolate (TMM) to another TMM, leading to the formation of TDM. The sequence is that of Diacylglycerol acyltransferase/mycolyltransferase Ag85B (fbpB) from Mycobacterium bovis (strain BCG / Pasteur 1173P2).